The primary structure comprises 476 residues: RNA-binding protein 45 (476 aa).

Residues 1–20 (MDEAGSSASGGGFRPGVDSL) form a disordered region. 2 RRM domains span residues 26-106 (SRIF…IAQS) and 121-195 (TRIF…PKNK). K34 is covalently cross-linked (Glycyl lysine isopeptide (Lys-Gly) (interchain with G-Cter in SUMO2)). Phosphoserine is present on residues S199 and S464. Residues 392-464 (ERLFIVFNPH…VRLKVMLADS (73 aa)) enclose the RRM 3 domain.

The protein localises to the cytoplasm. It localises to the nucleus. In terms of biological role, RNA-binding protein with binding specificity for poly(C). May play an important role in neural development. The chain is RNA-binding protein 45 (RBM45) from Homo sapiens (Human).